Consider the following 95-residue polypeptide: Large ribosomal subunit protein uL23 (95 aa).

Belongs to the universal ribosomal protein uL23 family. Part of the 50S ribosomal subunit. Contacts protein L29, and trigger factor when it is bound to the ribosome.

In terms of biological role, one of the early assembly proteins it binds 23S rRNA. One of the proteins that surrounds the polypeptide exit tunnel on the outside of the ribosome. Forms the main docking site for trigger factor binding to the ribosome. In Lawsonia intracellularis (strain PHE/MN1-00), this protein is Large ribosomal subunit protein uL23.